The sequence spans 101 residues: Small ribosomal subunit protein uS14 (101 aa).

The protein belongs to the universal ribosomal protein uS14 family. Part of the 30S ribosomal subunit. Contacts proteins S3 and S10.

Functionally, binds 16S rRNA, required for the assembly of 30S particles and may also be responsible for determining the conformation of the 16S rRNA at the A site. This is Small ribosomal subunit protein uS14 from Polaromonas sp. (strain JS666 / ATCC BAA-500).